A 158-amino-acid polypeptide reads, in one-letter code: Troponin C, isoform 1 (158 aa).

Ser1 bears the N-acetylserine mark. EF-hand domains are found at residues 15-50, 51-86, 91-126, and 127-158; these read EQIVVLRRAFDSFDRDKKGYISPETVSDILRMMGIK, VSSTSFKQIIEEIDEDGSGQIEFSEFLQLAAKFLIE, AMMKELKEAFRLYDKEGNGYITTQTLKEILHELDAR, and LTAEELVGIIEEIDEDGSGTVDFDEFMAMMTG. The Ca(2+) site is built by Asp64, Asp66, Ser68, Gln70, and Glu75. 5 residues coordinate Ca(2+): Asp140, Asp142, Ser144, Thr146, and Glu151.

The protein belongs to the troponin C family.

Troponin is the central regulatory protein of striated muscle contraction. Tn consists of three components: Tn-I which is the inhibitor of actomyosin ATPase, Tn-T which contains the binding site for tropomyosin and Tn-C. The binding of calcium to Tn-C abolishes the inhibitory action of Tn on actin filaments. The polypeptide is Troponin C, isoform 1 (Balanus nubilus (Giant acorn barnacle)).